Consider the following 425-residue polypeptide: Malate transporter MleP (425 aa).

11 helical membrane-spanning segments follow: residues 11-31, 35-55, 65-85, 96-116, 134-154, 196-216, 246-266, 269-289, 310-330, 339-359, and 401-421; these read GISL…TLLG, LDMV…YFIG, LGGG…FHIV, FMGG…CGSI, IALI…MLIG, IFSQ…IGAL, IKLD…LLMA, ILNK…IVFI, VIMT…LIDL, WQFV…SWFL, and FAQM…GILI.

Belongs to the 2-hydroxycarboxylate transporter (2-HCT) (TC 2.A.24) family.

The protein localises to the cell membrane. It catalyses the reaction (S)-lactate(in) + (S)-malate(out) = (S)-lactate(out) + (S)-malate(in). It carries out the reaction (R)-lactate(in) + (S)-malate(out) = (R)-lactate(out) + (S)-malate(in). The enzyme catalyses glycolate(in) + (S)-malate(out) = glycolate(out) + (S)-malate(in). Secondary transporter involved in malolactic fermentation. Catalyzes the uptake of divalent malate into the cell coupled to the exit of monovalent lactate, a product of malate degradation (precursor/product exchange). The malate/lactate exchange is electrogenic and results in the generation of a membrane potential. Is highly selective for the S-enantiomer of malate. In the absence of lactate, MleP can also catalyze the proton-dependent transport of malate. In vitro, transports a range of substrates that contain the 2-hydroxycarboxylate motif, HO-CR(2)-COO(-), with a preference for malate, lactate and glycolate. Modification of the OH or the COO(-) groups of the 2-hydroxycarboxylate motif drastically reduces the affinity of the transporter for the substrates, indicating their relevance in substrate recognition. Significant activity is also observed with some 2-oxocarboxylates. Transports only poorly citromalate. Citrate binds to MleP but is not translocated. This is Malate transporter MleP from Lactococcus lactis subsp. lactis (strain IL1403) (Streptococcus lactis).